The sequence spans 477 residues: V-type ATP synthase beta chain (477 aa).

The protein belongs to the ATPase alpha/beta chains family.

Functionally, produces ATP from ADP in the presence of a proton gradient across the membrane. The V-type beta chain is a regulatory subunit. This is V-type ATP synthase beta chain from Anaeromyxobacter sp. (strain K).